Consider the following 130-residue polypeptide: Ribonuclease VapC46 (130 aa).

Residues 4–118 form the PINc domain; sequence IYLDSSAIVK…CTYDDRMRDA (115 aa). Mg(2+)-binding residues include Asp7 and Asp91.

It belongs to the PINc/VapC protein family. Mg(2+) is required as a cofactor.

Its function is as follows. Toxic component of a type II toxin-antitoxin (TA) system. An RNase. Upon expression in M.smegmatis inhibits colony formation. Its toxic effect is neutralized by coexpression with cognate antitoxin VapB46. The protein is Ribonuclease VapC46 of Mycobacterium tuberculosis (strain ATCC 25618 / H37Rv).